Consider the following 147-residue polypeptide: Proteinase inhibitor type-2 (147 aa).

A signal peptide spans 1 to 25 (MAVHKEVSFVAYLLIVLGMFLYVDA). 2 tandem repeats follow at residues 25 to 81 (ALGC…DPKN) and 82 to 141 (PKAC…DEPK). Disulfide bonds link Cys28–Cys116, Cys32–Cys112, Cys40–Cys122, Cys52–Cys89, Cys55–Cys73, Cys56–Cys85, Cys62–Cys98, and Cys115–Cys133.

The protein belongs to the protease inhibitor I20 (potato type II proteinase inhibitor) family.

The polypeptide is Proteinase inhibitor type-2 (Solanum tuberosum (Potato)).